The primary structure comprises 380 residues: TPR repeat-containing thioredoxin TDX (380 aa).

Val2 carries the N-acetylvaline modification. Residues 49–59 (TERDYEDKAET) are compositionally biased toward basic and acidic residues. Residues 49–115 (TERDYEDKAE…DENRDDAQSE (67 aa)) are disordered. Acidic residues predominate over residues 69–91 (DDDDDIMESDVELDNSDVVEPDN). The segment covering 106–115 (DENRDDAQSE) has biased composition (basic and acidic residues). 3 TPR repeats span residues 112–145 (AQSEKSKAMEAISDGRFDEAIEHLTKAVMLNPTS), 147–179 (ILYATRASVFLKVKKPNAAIRDANVALQFNSDS), and 181–213 (KGYKSRGMAKAMLGQWEEAAADLHVASKLDYDE). Positions 240 to 263 (RKEKELQRAERERRKQQEAQEREA) are enriched in basic and acidic residues. The segment at 240-265 (RKEKELQRAERERRKQQEAQEREAQA) is disordered. The 127-residue stretch at 252 to 378 (RRKQQEAQER…LEQKIAQHSS (127 aa)) folds into the Thioredoxin domain. Active-site nucleophile residues include Cys304 and Cys307. Cys304 and Cys307 are oxidised to a cystine.

It belongs to the thioredoxin family. Oligomerization under high temperature.

Thiol-disulfide oxidoreductase that possesses insulin disulfide bonds reducing activity, disulfide reductase, foldase chaperone and holdase chaperone activities. Heat shock causes oligomerization and formation of high molecular weiht (HMW) complexes with concomitant functional switching from a disulfide reductase and foldase chaperone to a holdase chaperone. May interact with HSP70 proteins through the TPR repeats. In Arabidopsis thaliana (Mouse-ear cress), this protein is TPR repeat-containing thioredoxin TDX (TDX).